Here is a 530-residue protein sequence, read N- to C-terminus: Chaperone Ric-8A (530 aa).

The residue at position 435 (Ser435) is a Phosphoserine. Phosphothreonine is present on residues Thr440 and Thr442. Phosphoserine occurs at positions 501, 522, 523, and 527.

Belongs to the synembryn family. Interacts with GDP-bound G alpha proteins GNAI1, GNAO1 and GNAQ, and with GNA13 with lower affinity. Does not interact with G-alpha proteins when they are in complex with subunits beta and gamma. Interacts (via C-terminus) with RGS14; the interaction stimulates the dissociation of the complex between RGS14 and the active GTP-bound form of GNAI1. Interacts with NCS1; interaction is favored in the absence of Ca(2+) and myristoylation of NCS1 is not required. In terms of processing, phosphorylated at Ser-435 and Thr-440 by CK2, stabilizing its interface with G alpha proteins.

The protein resides in the cytoplasm. Its subcellular location is the cell cortex. In terms of biological role, chaperone that specifically binds and folds nascent G alpha proteins prior to G protein heterotrimer formation, promoting their stability and activity: folds GNAI1, GNAO1, GNA13 and GNAQ. Does not fold G(s) G-alpha proteins GNAS nor GNAL. Also acts as a guanine nucleotide exchange factor (GEF) for G alpha proteins by stimulating exchange of bound GDP for free GTP. Involved in regulation of microtubule pulling forces during mitotic movement of chromosomes by stimulating G(i)-alpha protein (GNAI1), possibly leading to release G(i)-alpha-GTP and NuMA proteins from the NuMA-GPSM2-G(i)-alpha-GDP complex. Also acts as an activator for G(q)-alpha (GNAQ) protein by enhancing the G(q)-coupled receptor-mediated ERK activation. This is Chaperone Ric-8A (RIC8A) from Pongo abelii (Sumatran orangutan).